A 358-amino-acid chain; its full sequence is MNDDISASFFSHRGDFTLDVAFHTPGQGVTALFGRSGSGKTTLLRFIAGLERAEKGALQIKDEVWQSADLFVPPHRRALGYVFQEPSLFAHLSVMDNLLYGHQRIPQWERRVAPEEVIRWLELEPLIGRNTQSLSGGQRQRVAIGRALLTSPKLLLMDEPLASLDLQSKEEILPYLDELFQQLDIPVFYVSHSPDEVMRLASHLVLLDHGCVRAGGPINELLTRPDLPLAHLEEASAVVHATIQAHDLEYHQTLLSVPGGVLAVHHKQGPIGQQVRLRIHAKDVSLALKPPELSSISNCIPVKVIDINVDREPSQVVVRLALGEETILSRVTRRSIDQLNIERGMSVFAQVKSVALID.

Residues 2–234 (NDDISASFFS…PDLPLAHLEE (233 aa)) enclose the ABC transporter domain. Residue 34 to 41 (GRSGSGKT) participates in ATP binding. The Mop domain maps to 293 to 358 (LSSISNCIPV…AQVKSVALID (66 aa)).

This sequence belongs to the ABC transporter superfamily. Molybdate importer (TC 3.A.1.8) family. As to quaternary structure, the complex is composed of two ATP-binding proteins (ModC), two transmembrane proteins (ModB) and a solute-binding protein (ModA).

Its subcellular location is the cell inner membrane. It carries out the reaction molybdate(out) + ATP + H2O = molybdate(in) + ADP + phosphate + H(+). Its function is as follows. Part of the ABC transporter complex ModABC involved in molybdenum import. Responsible for energy coupling to the transport system. This chain is Molybdenum import ATP-binding protein ModC, found in Hahella chejuensis (strain KCTC 2396).